The sequence spans 474 residues: ATP synthase subunit beta 1 (474 aa).

Residue 157 to 164 participates in ATP binding; it reads GGAGVGKT.

The protein belongs to the ATPase alpha/beta chains family. In terms of assembly, F-type ATPases have 2 components, CF(1) - the catalytic core - and CF(0) - the membrane proton channel. CF(1) has five subunits: alpha(3), beta(3), gamma(1), delta(1), epsilon(1). CF(0) has three main subunits: a(1), b(2) and c(9-12). The alpha and beta chains form an alternating ring which encloses part of the gamma chain. CF(1) is attached to CF(0) by a central stalk formed by the gamma and epsilon chains, while a peripheral stalk is formed by the delta and b chains.

The protein localises to the cell inner membrane. It carries out the reaction ATP + H2O + 4 H(+)(in) = ADP + phosphate + 5 H(+)(out). Functionally, produces ATP from ADP in the presence of a proton gradient across the membrane. The catalytic sites are hosted primarily by the beta subunits. This is ATP synthase subunit beta 1 from Albidiferax ferrireducens (strain ATCC BAA-621 / DSM 15236 / T118) (Rhodoferax ferrireducens).